The sequence spans 185 residues: Ribosome-recycling factor (185 aa).

This sequence belongs to the RRF family.

It localises to the cytoplasm. Functionally, responsible for the release of ribosomes from messenger RNA at the termination of protein biosynthesis. May increase the efficiency of translation by recycling ribosomes from one round of translation to another. This Vibrio campbellii (strain ATCC BAA-1116) protein is Ribosome-recycling factor.